Reading from the N-terminus, the 95-residue chain is Co-chaperonin GroES (95 aa).

It belongs to the GroES chaperonin family. As to quaternary structure, heptamer of 7 subunits arranged in a ring. Interacts with the chaperonin GroEL.

It is found in the cytoplasm. Its function is as follows. Together with the chaperonin GroEL, plays an essential role in assisting protein folding. The GroEL-GroES system forms a nano-cage that allows encapsulation of the non-native substrate proteins and provides a physical environment optimized to promote and accelerate protein folding. GroES binds to the apical surface of the GroEL ring, thereby capping the opening of the GroEL channel. This chain is Co-chaperonin GroES, found in Chlorobium phaeobacteroides (strain DSM 266 / SMG 266 / 2430).